The chain runs to 500 residues: Probable malate:quinone oxidoreductase (500 aa).

It belongs to the MQO family. It depends on FAD as a cofactor.

The catalysed reaction is (S)-malate + a quinone = a quinol + oxaloacetate. It functions in the pathway carbohydrate metabolism; tricarboxylic acid cycle; oxaloacetate from (S)-malate (quinone route): step 1/1. The sequence is that of Probable malate:quinone oxidoreductase from Bordetella avium (strain 197N).